Reading from the N-terminus, the 901-residue chain is Probable inorganic carbon transporter subunit DabA (901 aa).

Zn(2+) is bound by residues Cys-424, Asp-426, His-606, and Cys-621.

This sequence belongs to the inorganic carbon transporter (TC 9.A.2) DabA family. Forms a complex with DabB. Zn(2+) is required as a cofactor.

Its subcellular location is the cell membrane. In terms of biological role, part of an energy-coupled inorganic carbon pump. This chain is Probable inorganic carbon transporter subunit DabA, found in Staphylococcus aureus (strain USA300).